Here is a 123-residue protein sequence, read N- to C-terminus: Immunoglobulin lambda variable 5-45 (123 aa).

An N-terminal signal peptide occupies residues methionine 1–serine 19. The segment at glutamine 20–cysteine 44 is framework-1. The Ig-like domain occupies glutamine 20–serine 123. The cysteines at positions 41 and 115 are disulfide-linked. Positions serine 45–arginine 53 are complementarity-determining-1. The segment at isoleucine 54–arginine 70 is framework-2. The tract at residues leucine 68–aspartate 92 is disordered. The interval tyrosine 71 to lysine 77 is complementarity-determining-2. Residues glutamine 78–aspartate 92 are compositionally biased toward polar residues. The interval glutamine 78 to cysteine 115 is framework-3. The interval methionine 116 to serine 123 is complementarity-determining-3.

In terms of assembly, immunoglobulins are composed of two identical heavy chains and two identical light chains; disulfide-linked.

It is found in the secreted. It localises to the cell membrane. In terms of biological role, v region of the variable domain of immunoglobulin light chains that participates in the antigen recognition. Immunoglobulins, also known as antibodies, are membrane-bound or secreted glycoproteins produced by B lymphocytes. In the recognition phase of humoral immunity, the membrane-bound immunoglobulins serve as receptors which, upon binding of a specific antigen, trigger the clonal expansion and differentiation of B lymphocytes into immunoglobulins-secreting plasma cells. Secreted immunoglobulins mediate the effector phase of humoral immunity, which results in the elimination of bound antigens. The antigen binding site is formed by the variable domain of one heavy chain, together with that of its associated light chain. Thus, each immunoglobulin has two antigen binding sites with remarkable affinity for a particular antigen. The variable domains are assembled by a process called V-(D)-J rearrangement and can then be subjected to somatic hypermutations which, after exposure to antigen and selection, allow affinity maturation for a particular antigen. The chain is Immunoglobulin lambda variable 5-45 from Homo sapiens (Human).